A 189-amino-acid chain; its full sequence is Threonylcarbamoyl-AMP synthase (189 aa).

Positions 6–189 (TAIFTPIIDA…VLTGEQIRQG (184 aa)) constitute a YrdC-like domain.

This sequence belongs to the SUA5 family. TsaC subfamily.

It localises to the cytoplasm. It catalyses the reaction L-threonine + hydrogencarbonate + ATP = L-threonylcarbamoyladenylate + diphosphate + H2O. In terms of biological role, required for the formation of a threonylcarbamoyl group on adenosine at position 37 (t(6)A37) in tRNAs that read codons beginning with adenine. Catalyzes the conversion of L-threonine, HCO(3)(-)/CO(2) and ATP to give threonylcarbamoyl-AMP (TC-AMP) as the acyladenylate intermediate, with the release of diphosphate. In Serratia proteamaculans (strain 568), this protein is Threonylcarbamoyl-AMP synthase.